The sequence spans 125 residues: MIKEFKEFISRGNMMDLAVGVIIGAAFTAIVNSLVKDLINPLIGLFIGKIDLSNLKFTVGEATFKYGSFLNAVINFLIIALVVFFLIKLVNKMMPKKEVEEDDPTPTNEELYLRQIRDLLQEKTK.

The next 2 helical transmembrane spans lie at 15 to 35 (MDLAVGVIIGAAFTAIVNSLV) and 67 to 87 (GSFLNAVINFLIIALVVFFLI).

Belongs to the MscL family. Homopentamer.

The protein localises to the cell membrane. Channel that opens in response to stretch forces in the membrane lipid bilayer. May participate in the regulation of osmotic pressure changes within the cell. The chain is Large-conductance mechanosensitive channel from Lactobacillus gasseri (strain ATCC 33323 / DSM 20243 / BCRC 14619 / CIP 102991 / JCM 1131 / KCTC 3163 / NCIMB 11718 / NCTC 13722 / AM63).